The primary structure comprises 150 residues: C-C motif chemokine 25 (150 aa).

The signal sequence occupies residues 1 to 23 (MNLWLLACLVAGFLGAWAPAVHT). 2 disulfides stabilise this stretch: cysteine 30–cysteine 58 and cysteine 31–cysteine 75.

It belongs to the intercrine beta (chemokine CC) family. In terms of tissue distribution, specifically expressed by thymic dendritic cells. High levels in thymus and small intestine.

The protein localises to the secreted. Potentially involved in T-cell development. Recombinant protein shows chemotactic activity on thymocytes, macrophages, THP-1 cells, and dendritics cells but is inactive on peripheral blood lymphocytes and neutrophils. Binds to CCR9. Isoform 2 is an antagonist of isoform 1. Binds to atypical chemokine receptor ACKR4 and mediates the recruitment of beta-arrestin (ARRB1/2) to ACKR4. The sequence is that of C-C motif chemokine 25 (CCL25) from Homo sapiens (Human).